The primary structure comprises 620 residues: 1-deoxy-D-xylulose-5-phosphate synthase (620 aa).

Residues histidine 80 and 121 to 123 (GHS) contribute to the thiamine diphosphate site. Aspartate 152 is a binding site for Mg(2+). Residues 153 to 154 (GA), asparagine 181, tyrosine 288, and glutamate 370 each bind thiamine diphosphate. Asparagine 181 contacts Mg(2+).

It belongs to the transketolase family. DXPS subfamily. Homodimer. It depends on Mg(2+) as a cofactor. Requires thiamine diphosphate as cofactor.

The catalysed reaction is D-glyceraldehyde 3-phosphate + pyruvate + H(+) = 1-deoxy-D-xylulose 5-phosphate + CO2. It functions in the pathway metabolic intermediate biosynthesis; 1-deoxy-D-xylulose 5-phosphate biosynthesis; 1-deoxy-D-xylulose 5-phosphate from D-glyceraldehyde 3-phosphate and pyruvate: step 1/1. In terms of biological role, catalyzes the acyloin condensation reaction between C atoms 2 and 3 of pyruvate and glyceraldehyde 3-phosphate to yield 1-deoxy-D-xylulose-5-phosphate (DXP). In Salmonella agona (strain SL483), this protein is 1-deoxy-D-xylulose-5-phosphate synthase.